Consider the following 472-residue polypeptide: MVQSKAKAGFQAGVKDYRLTYYTPDYTPKDTDLLACFRVTPQPGVPPEEAGAAVAAESSTGTWTTVWTDGLTDLDRYKGRCYDIEPVPNEDNQYFCFVAYPLDLFEEGSVTNILTSIVGNVFGFKALRALRLEDIRFPVALLKTFQGPPHGITVERDKLNKYGRPLLGCTIKPKLGLSAKNYGRAVYECLRGGLDFTKDDENINSQPFMRWRDRFLFVQEAIEKSQAETNEIKGHYLNVTAGTLEEMMKRAEFAKEIKTPIIMHDYLTGGFTANTTLARWCRDNGVLLHIHRAMHAVIDRQKNHGIHFRVLAKCLRMSGGDHLHSGTVVGKLEGERGITMGFVDLMREDYVEEDRARGIFFTQDWASMPGVMPVASGGIHVWHMPALVEIFGDDSCLQFGGGTLGHPWGNAPGATANRVALEACIQARNEGRSLAREGNEVIREAARWSPELAAACELWKEIKFEFEAMDTL.

The substrate site is built by N120 and T170. The Proton acceptor role is filled by K172. K174 contributes to the substrate binding site. Positions 198, 200, and 201 each coordinate Mg(2+). Residue K198 is modified to N6-carboxylysine. The active-site Proton acceptor is the H291. Substrate contacts are provided by R292, H324, and S376.

It belongs to the RuBisCO large chain family. Type I subfamily. As to quaternary structure, heterohexadecamer of 8 large chains and 8 small chains. The cofactor is Mg(2+).

Its subcellular location is the carboxysome. The catalysed reaction is 2 (2R)-3-phosphoglycerate + 2 H(+) = D-ribulose 1,5-bisphosphate + CO2 + H2O. It carries out the reaction D-ribulose 1,5-bisphosphate + O2 = 2-phosphoglycolate + (2R)-3-phosphoglycerate + 2 H(+). RuBisCO catalyzes two reactions: the carboxylation of D-ribulose 1,5-bisphosphate, the primary event in carbon dioxide fixation, as well as the oxidative fragmentation of the pentose substrate in the photorespiration process. Both reactions occur simultaneously and in competition at the same active site. This Gloeothece citriformis (strain PCC 7424) (Cyanothece sp. (strain PCC 7424)) protein is Ribulose bisphosphate carboxylase large chain.